The chain runs to 338 residues: Ribosomal RNA large subunit methyltransferase F (338 aa).

The interval 1–21 is disordered; the sequence is MTQKKNKPTQKKKGLHPRNPH.

The protein belongs to the methyltransferase superfamily. METTL16/RlmF family.

It localises to the cytoplasm. The catalysed reaction is adenosine(1618) in 23S rRNA + S-adenosyl-L-methionine = N(6)-methyladenosine(1618) in 23S rRNA + S-adenosyl-L-homocysteine + H(+). Specifically methylates the adenine in position 1618 of 23S rRNA. The chain is Ribosomal RNA large subunit methyltransferase F from Photobacterium profundum (strain SS9).